We begin with the raw amino-acid sequence, 639 residues long: MEATATKEHLNFQTEVKQLLKLMIHSLYSNKEIFLRELISNASDAADKLRFEALTDGALYESDSDLKIRVSYDKEARTITVADNGIGMSRQEVIDHIGTIAKSGTREFFDALTGDQAKDAHLIGQFGVGFYSAFIVADKVTLTTRRAGLTHEHGVRWESGGEGDYTLETIDKPGRGTEVTLHLREGEDELLNGWRLRSIIRKYSDHITLPIVMKKEEWSQEKNENTVTEEDETINQASALWARPKNEISEEQYNEFYKHVAHDFEPPLAYVHARVEGKQEYTQLLYVPSRAPFDLYDRESRHGIKLYVRRVFIMDDAKQLLPNYLRFVRGIIDSNDLPLNVSREILQESKDIEAMRAGSVKKVLGLLDDLAQSETDEGKAKFKTFWKEFGQVMKEGVAEDYANRERIAKLLRFVSTHSDSEEQDVSLSDYVGRMKDGQEKIYYVTADSLTAAKSSPHLEIFRKKDIEVILLFDRVDEWLVANLPEFEGKHLQSVAKGSLDLGKLEDEAEKKEQEKEAGEYKELTEKIKEVLGEQVKDVRITLRLTESPACLVTETHDMSGNLERLLKSAGQKVTHTKPILEINPYHPMVERLKSEETHFADWSHILFDQALLAEGGQLEDPASFVKRINQLFLSTGSKE.

The tract at residues 1–343 (MEATATKEHL…SNDLPLNVSR (343 aa)) is a; substrate-binding. Residues 344-564 (EILQESKDIE…THDMSGNLER (221 aa)) form a b region. The c stretch occupies residues 565–639 (LLKSAGQKVT…QLFLSTGSKE (75 aa)).

This sequence belongs to the heat shock protein 90 family. In terms of assembly, homodimer.

The protein localises to the cytoplasm. In terms of biological role, molecular chaperone. Has ATPase activity. In Nitrosospira multiformis (strain ATCC 25196 / NCIMB 11849 / C 71), this protein is Chaperone protein HtpG.